We begin with the raw amino-acid sequence, 389 residues long: Apoptosis inhibitor U19 (389 aa).

This sequence belongs to the beta-herpesvirinae UL38 protein family. In terms of assembly, interacts with host MDM2; this interaction leads to the stabilization of host TP53.

It is found in the host cytoplasm. The protein resides in the host nucleus. In terms of biological role, plays a role in the inhibition of host apoptosis to facilitate efficient viral replication. Promotes stabilization and inactivation of host TP53 through interaction with host MDM2. The protein is Apoptosis inhibitor U19 (U19) of Human herpesvirus 6A (strain Uganda-1102) (HHV-6 variant A).